We begin with the raw amino-acid sequence, 700 residues long: MYCPKAYENEKKNEDLEFERSQSTFSVSELNFILNNNDHNIINIKNEIKKFIDNDEIISKPQEIHFLSREEQYKRALYVSSKLIEIKKRFGEIGRDQYYQSLFEEIPFVINDIVFACAFKSLASDEQMNRLYSKFENYQYFGSYSQTEIGHGSNVQGIETTCTFIKETGEFELNSPNLTSTKFWIGGLGKLATHTIVFAQLLIPSSIDGKLKNYGPHPFILQVRSLDDHSPLPGVTVGDIGPKLGFNSIDNGFLRLDHVRIPRENMLSRFFRVNEQGEYEKPKHPKLIYAGMVGVRSSMIENSFVSLSRAVTIAIRYSTIRKQFKSNRLDKQEKKIIEYSNQMNRIIPYLAQTFAYFFTGKRFSIEFDQMMKAVKHNQDTTLLSELHANSSGLKSLMTQSTSDGIESCRLSCGGHGYSQFSGLPYLWSNYVHMSSAEGESNLLPQQTTKYLLTILRKVLSGGGGSSDTTTADDDNKPIGKSVKYINDEFQSSFENINQFIQEKGLNSIIHPDSLLQLFKHRSFILIKSIAESIQEQMSNGNKDIPQIWSDLNVEINHCSKAHCQLYVIQSFYDQILLLSSNSSSCSSSITTVLIQLLQTYSIWIINSNLVDFLQDQYVELSQIDFLKKSLINFYKLLRPNLVPLVDSFDLCNTTLGSALGSYNGDVYSTLYKWASTQPFNKNSLPLGFNETIKPLINSKL.

FAD is bound by residues T147, G186, and 412 to 417; that span reads CGGHGY. The Proton acceptor role is filled by E437. The Microbody targeting signal signature appears at 698–700; sequence SKL.

Belongs to the acyl-CoA oxidase family. FAD is required as a cofactor.

The protein localises to the peroxisome. The catalysed reaction is a 2,3-saturated acyl-CoA + O2 = a (2E)-enoyl-CoA + H2O2. In terms of biological role, catalyzes the desaturation of acyl-CoAs to 2-trans-enoyl-CoAs. First enzyme of the fatty acid beta-oxidation pathway. This chain is Peroxisomal acyl-coenzyme A oxidase 1 (acox1), found in Dictyostelium discoideum (Social amoeba).